The following is a 421-amino-acid chain: Serine hydroxymethyltransferase (421 aa).

Residues Leu118 and 122–124 (GHL) contribute to the (6S)-5,6,7,8-tetrahydrofolate site. An N6-(pyridoxal phosphate)lysine modification is found at Lys226.

It belongs to the SHMT family. As to quaternary structure, homodimer. Pyridoxal 5'-phosphate is required as a cofactor.

It localises to the cytoplasm. It carries out the reaction (6R)-5,10-methylene-5,6,7,8-tetrahydrofolate + glycine + H2O = (6S)-5,6,7,8-tetrahydrofolate + L-serine. It participates in one-carbon metabolism; tetrahydrofolate interconversion. Its pathway is amino-acid biosynthesis; glycine biosynthesis; glycine from L-serine: step 1/1. Catalyzes the reversible interconversion of serine and glycine with tetrahydrofolate (THF) serving as the one-carbon carrier. This reaction serves as the major source of one-carbon groups required for the biosynthesis of purines, thymidylate, methionine, and other important biomolecules. Also exhibits THF-independent aldolase activity toward beta-hydroxyamino acids, producing glycine and aldehydes, via a retro-aldol mechanism. The protein is Serine hydroxymethyltransferase of Mycoplasmopsis agalactiae (strain NCTC 10123 / CIP 59.7 / PG2) (Mycoplasma agalactiae).